A 148-amino-acid polypeptide reads, in one-letter code: Protein RESISTANCE TO POWDERY MILDEW 8.1 (148 aa).

The RPW8 domain maps to 1-148 (MPIGELAIGA…VISACSKIRA (148 aa)). The chain crosses the membrane as a helical span at residues 7–23 (AIGAVLGVGAQAIYDRF). Residues 120–140 (DDIKEIKAKISEMDTKLAEVI) are a coiled coil.

The protein belongs to the plant RPW8 protein family.

It is found in the membrane. Functionally, disease resistance (R) protein that induces localized, salicylic acid-dependent defenses. Confers resistance to powdery mildew (e.g. Erysiphe cichoracearum UCSC1). In Arabidopsis thaliana (Mouse-ear cress), this protein is Protein RESISTANCE TO POWDERY MILDEW 8.1.